A 53-amino-acid chain; its full sequence is Dihydrolipoyl dehydrogenase (53 aa).

Residues 35–44 (EKYPTFGGTC) and Lys53 contribute to the FAD site. Cys44 and Cys49 form a disulfide bridge.

It belongs to the class-I pyridine nucleotide-disulfide oxidoreductase family. In terms of assembly, homodimer. It depends on FAD as a cofactor.

The protein localises to the mitochondrion. The enzyme catalyses N(6)-[(R)-dihydrolipoyl]-L-lysyl-[protein] + NAD(+) = N(6)-[(R)-lipoyl]-L-lysyl-[protein] + NADH + H(+). Its activity is regulated as follows. Lipoamide reduction and the NADH -&gt; NAD reaction are both completely inhibited by copper and cadmium ions. Its function is as follows. Lipoamide dehydrogenase is a component of the glycine cleavage system as well as of the alpha-ketoacid dehydrogenase complexes. This enzyme has lipoamide dehydrogenase activity and NADH -&gt; NAD transhydrogenation activity. Also displays some NADH-ferricyanide reductase and NADPH -&gt; NAD transydrogenation activities. In Hymenolepis diminuta (Rat tapeworm), this protein is Dihydrolipoyl dehydrogenase.